Reading from the N-terminus, the 230-residue chain is Uracil-DNA glycosylase (230 aa).

The active-site Proton acceptor is aspartate 70.

The protein belongs to the uracil-DNA glycosylase (UDG) superfamily. UNG family.

It is found in the cytoplasm. It catalyses the reaction Hydrolyzes single-stranded DNA or mismatched double-stranded DNA and polynucleotides, releasing free uracil.. In terms of biological role, excises uracil residues from the DNA which can arise as a result of misincorporation of dUMP residues by DNA polymerase or due to deamination of cytosine. This is Uracil-DNA glycosylase from Pseudomonas putida (strain GB-1).